The chain runs to 467 residues: Trigger factor (467 aa).

Residues 174-261 (SDIAILTFKG…LQDLKTRELP (88 aa)) enclose the PPIase FKBP-type domain. A disordered region spans residues 439 to 467 (PKKALNEKVKSSKPKNTQKKTDKTKKDSP). Basic and acidic residues predominate over residues 457 to 467 (KKTDKTKKDSP).

It belongs to the FKBP-type PPIase family. Tig subfamily.

It is found in the cytoplasm. The catalysed reaction is [protein]-peptidylproline (omega=180) = [protein]-peptidylproline (omega=0). Its function is as follows. Involved in protein export. Acts as a chaperone by maintaining the newly synthesized protein in an open conformation. Functions as a peptidyl-prolyl cis-trans isomerase. The protein is Trigger factor of Prochlorococcus marinus (strain SARG / CCMP1375 / SS120).